We begin with the raw amino-acid sequence, 461 residues long: Probable ribonuclease FAU-1 (461 aa).

An S1 motif domain is found at 89 to 158 (GAVFYGEVTE…ARPSLATALR (70 aa)).

The protein belongs to the FAU-1 family.

Functionally, probable RNase involved in rRNA stability through maturation and/or degradation of precursor rRNAs. Binds to RNA in loop regions with AU-rich sequences. The polypeptide is Probable ribonuclease FAU-1 (Natronomonas pharaonis (strain ATCC 35678 / DSM 2160 / CIP 103997 / JCM 8858 / NBRC 14720 / NCIMB 2260 / Gabara) (Halobacterium pharaonis)).